Here is a 123-residue protein sequence, read N- to C-terminus: SOSS complex subunit C homolog (123 aa).

The protein belongs to the SOSS-C family.

The chain is SOSS complex subunit C homolog from Drosophila ananassae (Fruit fly).